The following is a 225-amino-acid chain: PKHD-type hydroxylase YbiX (225 aa).

The Fe2OG dioxygenase domain maps to 78–177 (TLSTPLFNRY…RVASFMWIQS (100 aa)). Fe cation is bound by residues His96, Asp98, and His158. Arg168 provides a ligand contact to 2-oxoglutarate.

The cofactor is Fe(2+). L-ascorbate serves as cofactor.

This is PKHD-type hydroxylase YbiX from Shigella boydii serotype 18 (strain CDC 3083-94 / BS512).